The chain runs to 291 residues: Small ribosomal subunit protein uS2 (291 aa).

The tract at residues 235–291 (NLQEDEESGDSGVDPYQDREEEITDYSNYTPKDEASGDDEDEEDNSLVNDEDLYDDK) is disordered. Residues 270 to 291 (SGDDEDEEDNSLVNDEDLYDDK) are compositionally biased toward acidic residues.

The protein belongs to the universal ribosomal protein uS2 family.

In Treponema denticola (strain ATCC 35405 / DSM 14222 / CIP 103919 / JCM 8153 / KCTC 15104), this protein is Small ribosomal subunit protein uS2.